Here is a 426-residue protein sequence, read N- to C-terminus: Gamma-glutamyl phosphate reductase (426 aa).

The protein belongs to the gamma-glutamyl phosphate reductase family.

Its subcellular location is the cytoplasm. It catalyses the reaction L-glutamate 5-semialdehyde + phosphate + NADP(+) = L-glutamyl 5-phosphate + NADPH + H(+). Its pathway is amino-acid biosynthesis; L-proline biosynthesis; L-glutamate 5-semialdehyde from L-glutamate: step 2/2. In terms of biological role, catalyzes the NADPH-dependent reduction of L-glutamate 5-phosphate into L-glutamate 5-semialdehyde and phosphate. The product spontaneously undergoes cyclization to form 1-pyrroline-5-carboxylate. The sequence is that of Gamma-glutamyl phosphate reductase from Cupriavidus necator (strain ATCC 17699 / DSM 428 / KCTC 22496 / NCIMB 10442 / H16 / Stanier 337) (Ralstonia eutropha).